A 496-amino-acid chain; its full sequence is Ribose import ATP-binding protein RbsA (496 aa).

ABC transporter domains lie at 5 to 242 (IEMK…VGRS) and 252 to 496 (SQIG…TGGE). 37-44 (GENGAGKS) provides a ligand contact to ATP.

This sequence belongs to the ABC transporter superfamily. Ribose importer (TC 3.A.1.2.1) family. In terms of assembly, the complex is composed of an ATP-binding protein (RbsA), two transmembrane proteins (RbsC) and a solute-binding protein (RbsB).

The protein resides in the cell membrane. It catalyses the reaction D-ribose(out) + ATP + H2O = D-ribose(in) + ADP + phosphate + H(+). Part of the ABC transporter complex RbsABC involved in ribose import. Responsible for energy coupling to the transport system. The sequence is that of Ribose import ATP-binding protein RbsA from Bacillus cereus (strain ATCC 14579 / DSM 31 / CCUG 7414 / JCM 2152 / NBRC 15305 / NCIMB 9373 / NCTC 2599 / NRRL B-3711).